A 708-amino-acid polypeptide reads, in one-letter code: C-Jun-amino-terminal kinase-interacting protein 1 (708 aa).

A disordered region spans residues 1-26 (MAERESGLSGGAASPPAASPFLGLHI). Positions 11–24 (GAASPPAASPFLGL) are enriched in low complexity. Residues S14, S28, and S39 each carry the phosphoserine modification. Positions 69–368 (PPRAGLLSAG…PPRASLSSDT (300 aa)) are disordered. Residues 71–87 (RAGLLSAGSSGSAGSRL) show a composition bias toward low complexity. T103 carries the phosphothreonine; by MAPK8, MAPK9 and MAPK10 modification. Residues 105–116 (GAEDDEEDDDEL) show a composition bias toward acidic residues. The interval 126-282 (SKAESGQEPA…EATEEIYLTP (157 aa)) is JNK-binding domain (JBD). The residue at position 149 (S149) is a Phosphoserine. The tract at residues 154-173 (RPKRPTTLNLFPQVPRSQDT) is minimal inhibitory domain (MID). Polar residues predominate over residues 159–179 (TTLNLFPQVPRSQDTLNNNSL). Residues S178, S184, S190, S192, and S193 each carry the phosphoserine modification. A compositionally biased stretch (polar residues) spans 191–201 (RSSSPLKTGEQ). A Phosphothreonine; by MAPK8, MAPK9 and MAPK10 modification is found at T202. Position 211 is a phosphoserine (S211). The span at 220-232 (PVPTQDRGTSTDS) shows a compositional bias: polar residues. Residues 264-274 (IHYQADVRLEA) are compositionally biased toward basic and acidic residues. Positions 280-468 (LTPVQRPPDP…NVFMSGRSRS (189 aa)) are interaction with MAP3K7. Residues 292–308 (PTSTFLPPTESRMSVSS) show a composition bias toward polar residues. Residues S308, S325, S327, S337, S352, S363, S366, S404, and S406 each carry the phosphoserine modification. 2 short sequence motifs (D-box) span residues 350–357 (RGSLGEPP) and 361–369 (RASLSSDTS). At T408 the chain carries Phosphothreonine. The interval 426–448 (EEYEEAPQPRPPTCLSEDSTPDE) is disordered. Phosphoserine occurs at positions 441 and 444. The residue at position 445 (T445) is a Phosphothreonine. S466, S468, S469, and S470 each carry phosphoserine. The segment at 468–657 (SSSAESFGLF…PKNNKYFGFI (190 aa)) is interaction with VRK2. An SH3 domain is found at 485 to 546 (EHEQTHRAIF…PAYYAIEVTK (62 aa)). The PID domain occupies 558–697 (SDWIDQFRVK…FQQFYKQFVE (140 aa)).

Belongs to the JIP scaffold family. Forms homo- or heterooligomeric complexes. Binds specific components of the JNK signaling pathway namely MAPK8/JNK1, MAPK9/JNK2, MAPK10/JNK3, MAP2K7/MKK7, MAP3K11/MLK3 and DLK1. Also binds the proline-rich domain-containing splice variant of apolipoprotein E receptor 2 (ApoER2). Interacts, via the PID domain, with ARHGEF28. Binds the cytoplasmic tails of LRP1 and LRP2 (Megalin). Binds the TPR motif-containing C-terminal of kinesin light chain, KLC1. Pre-assembled MAPK8IP1 scaffolding complexes are then transported as a cargo of kinesin, to the required subcellular location. Interacts with the cytoplasmic domain of APP. Interacts with DCLK2, VRK2 and MAP3K7/TAK1. Found in a complex with SH3RF1, RAC1, MAP3K11/MLK3, MAP2K7/MKK7 and MAPK8/JNK1. Found in a complex with SH3RF1, RAC2, MAP3K7/TAK1, MAP2K7/MKK7, MAPK8/JNK1 and MAPK9/JNK2. Interacts with SH3RF2. Phosphorylated by MAPK8, MAPK9 and MAPK10. Phosphorylation on Thr-103 is also necessary for the dissociation and activation of MAP3K12. Phosphorylated by VRK2. Hyperphosphorylated during mitosis following activation of stress-activated and MAP kinases. In terms of processing, ubiquitinated. Two preliminary events are required to prime for ubiquitination; phosphorylation and an increased in intracellular calcium concentration. Then, the calcium influx initiates ubiquitination and degradation by the ubiquitin-proteasome pathway. As to expression, highly expressed in brain and pancreatic beta-cells. Weaker expression found in kidney.

It localises to the cytoplasm. The protein resides in the perinuclear region. It is found in the nucleus. Its subcellular location is the endoplasmic reticulum membrane. The protein localises to the mitochondrion membrane. Its function is as follows. The JNK-interacting protein (JIP) group of scaffold proteins selectively mediates JNK signaling by aggregating specific components of the MAPK cascade to form a functional JNK signaling module. Required for JNK activation in response to excitotoxic stress. Cytoplasmic MAPK8IP1 causes inhibition of JNK-regulated activity by retaining JNK in the cytoplasm and thus inhibiting the JNK phosphorylation of c-Jun. May also participate in ApoER2-specific reelin signaling. Directly, or indirectly, regulates GLUT2 gene expression and beta-cell function. Appears to have a role in cell signaling in mature and developing nerve terminals. May function as a regulator of vesicle transport, through interactions with the JNK-signaling components and motor proteins. Functions as an anti-apoptotic protein and whose level seems to influence the beta-cell death or survival response. Acts as a scaffold protein that coordinates with SH3RF1 in organizing different components of the JNK pathway, including RAC1 or RAC2, MAP3K11/MLK3 or MAP3K7/TAK1, MAP2K7/MKK7, MAPK8/JNK1 and/or MAPK9/JNK2 into a functional multiprotein complex to ensure the effective activation of the JNK signaling pathway. Regulates the activation of MAPK8/JNK1 and differentiation of CD8(+) T-cells. This chain is C-Jun-amino-terminal kinase-interacting protein 1 (Mapk8ip1), found in Rattus norvegicus (Rat).